The following is a 342-amino-acid chain: tRNA N6-adenosine threonylcarbamoyltransferase (342 aa).

Fe cation-binding residues include His-111 and His-115. Substrate contacts are provided by residues 134-138 (LVSGG), Asp-167, Gly-180, and Asn-276. Asp-304 provides a ligand contact to Fe cation.

The protein belongs to the KAE1 / TsaD family. Requires Fe(2+) as cofactor.

Its subcellular location is the cytoplasm. It carries out the reaction L-threonylcarbamoyladenylate + adenosine(37) in tRNA = N(6)-L-threonylcarbamoyladenosine(37) in tRNA + AMP + H(+). Required for the formation of a threonylcarbamoyl group on adenosine at position 37 (t(6)A37) in tRNAs that read codons beginning with adenine. Is involved in the transfer of the threonylcarbamoyl moiety of threonylcarbamoyl-AMP (TC-AMP) to the N6 group of A37, together with TsaE and TsaB. TsaD likely plays a direct catalytic role in this reaction. This is tRNA N6-adenosine threonylcarbamoyltransferase from Helicobacter acinonychis (strain Sheeba).